The primary structure comprises 154 residues: 17.7 kDa class I heat shock protein (154 aa).

A sHSP domain is found at 40-154 (ETSAFANTRI…PDVKSIEISG (115 aa)).

The protein belongs to the small heat shock protein (HSP20) family. In terms of assembly, forms oligomeric structures.

The protein localises to the cytoplasm. The protein is 17.7 kDa class I heat shock protein of Solanum peruvianum (Peruvian tomato).